A 531-amino-acid chain; its full sequence is Flavin-containing monooxygenase 3 (531 aa).

FAD is bound by residues 9 to 13 (GAGIS), glutamate 32, 40 to 41 (LW), and 61 to 62 (NS). NADP(+)-binding positions include 60 to 61 (TN) and 195 to 198 (SGCD). Residues 511 to 531 (FSPWLKLLAIAVLLIAAVLVF) traverse the membrane as a helical segment.

The protein belongs to the FMO family. It depends on FAD as a cofactor. As to expression, liver.

Its subcellular location is the microsome membrane. It is found in the endoplasmic reticulum membrane. It carries out the reaction trimethylamine + NADPH + O2 = trimethylamine N-oxide + NADP(+) + H2O. The enzyme catalyses N,N-dimethylaniline + NADPH + O2 + H(+) = N,N-dimethylaniline N-oxide + NADP(+) + H2O. The catalysed reaction is hypotaurine + NADPH + O2 + H(+) = taurine + NADP(+) + H2O. It catalyses the reaction (S)-nicotine + NADPH + O2 = trans-(S)-nicotine N(1')-oxide + NADP(+) + H2O. It carries out the reaction albendazole + NADPH + O2 + H(+) = albendazole S-oxide + NADP(+) + H2O. In terms of biological role, essential hepatic enzyme that catalyzes the oxygenation of a wide variety of nitrogen- and sulfur-containing compounds including drugs as well as dietary compounds. Plays an important role in the metabolism of trimethylamine (TMA), via the production of trimethylamine N-oxide (TMAO) metabolite. TMA is generated by the action of gut microbiota using dietary precursors such as choline, choline containing compounds, betaine or L-carnitine. By regulating TMAO concentration, FMO3 directly impacts both platelet responsiveness and rate of thrombus formation. This is Flavin-containing monooxygenase 3 (FMO3) from Oryctolagus cuniculus (Rabbit).